The primary structure comprises 651 residues: Protein cueball (651 aa).

Residues 1 to 21 (MILRLFILLSIITVYLQLSVG) form the signal peptide. Topologically, residues 22 to 540 (IQQQFEFAIT…VCLAPNAWTG (519 aa)) are extracellular. N-linked (GlcNAc...) asparagine glycosylation is found at asparagine 77, asparagine 102, and asparagine 114. LDL-receptor class B repeat units lie at residues 115 to 162 (RTIY…DICG), 163 to 207 (RKLY…DQGA), and 208 to 253 (KRIF…TRNA). An N-linked (GlcNAc...) asparagine glycan is attached at asparagine 183. The segment at 290–311 (VEGEEGTGAMDDNDIWPVGDFE) is disordered. The N-linked (GlcNAc...) asparagine glycan is linked to asparagine 324. EGF-like domains lie at 374–408 (QLDE…TRCE), 409–440 (TNEC…YSGE), and 443–480 (EVKK…LRCE). 7 cysteine pairs are disulfide-bonded: cysteine 383/cysteine 396, cysteine 398/cysteine 407, cysteine 412/cysteine 421, cysteine 416/cysteine 431, cysteine 447/cysteine 457, cysteine 451/cysteine 468, and cysteine 470/cysteine 479. Asparagine 482 and asparagine 499 each carry an N-linked (GlcNAc...) asparagine glycan. Residues 541–561 (SVLMPLMISLILILLLLTIFI) form a helical membrane-spanning segment. The Cytoplasmic portion of the chain corresponds to 562 to 651 (HGLRRLYKPK…LIHNMEDDLY (90 aa)).

The protein belongs to the cueball family.

The protein localises to the cell membrane. Functionally, has a role in spermatogenesis and oogenesis. This is Protein cueball from Drosophila willistoni (Fruit fly).